A 419-amino-acid chain; its full sequence is Acyl-coenzyme A thioesterase 1 (419 aa).

Catalysis depends on charge relay system residues Ser232, Asp324, and His358. Ser416 carries the phosphoserine modification.

This sequence belongs to the C/M/P thioester hydrolase family. Monomer. In terms of tissue distribution, expressed in heart, kidney, brown adipose tissue, white adipose tissue, adrenal gland and muscle.

It localises to the cytoplasm. Its subcellular location is the cytosol. It catalyses the reaction hexadecanoyl-CoA + H2O = hexadecanoate + CoA + H(+). The catalysed reaction is decanoyl-CoA + H2O = decanoate + CoA + H(+). The enzyme catalyses dodecanoyl-CoA + H2O = dodecanoate + CoA + H(+). It carries out the reaction tetradecanoyl-CoA + H2O = tetradecanoate + CoA + H(+). It catalyses the reaction octadecanoyl-CoA + H2O = octadecanoate + CoA + H(+). The catalysed reaction is eicosanoyl-CoA + H2O = eicosanoate + CoA + H(+). The enzyme catalyses (9Z)-octadecenoyl-CoA + H2O = (9Z)-octadecenoate + CoA + H(+). It carries out the reaction (9Z)-hexadecenoyl-CoA + H2O = (9Z)-hexadecenoate + CoA + H(+). It catalyses the reaction (9E)-octadecenoyl-CoA + H2O = (9E)-octadecenoate + CoA + H(+). The protein operates within lipid metabolism; fatty acid metabolism. Functionally, catalyzes the hydrolysis of acyl-CoAs into free fatty acids and coenzyme A (CoASH), regulating their respective intracellular levels. More active towards saturated and unsaturated long chain fatty acyl-CoAs (C12-C20). This Mus musculus (Mouse) protein is Acyl-coenzyme A thioesterase 1 (Acot1).